A 274-amino-acid chain; its full sequence is Exosome complex component Rrp42 (274 aa).

This sequence belongs to the RNase PH family. Rrp42 subfamily. Component of the archaeal exosome complex. Forms a hexameric ring-like arrangement composed of 3 Rrp41-Rrp42 heterodimers. The hexameric ring associates with a trimer of Rrp4 and/or Csl4 subunits.

It is found in the cytoplasm. Non-catalytic component of the exosome, which is a complex involved in RNA degradation. Contributes to the structuring of the Rrp41 active site. In Pyrococcus abyssi (strain GE5 / Orsay), this protein is Exosome complex component Rrp42.